A 689-amino-acid polypeptide reads, in one-letter code: Elongation factor G (689 aa).

A tr-type G domain is found at 8-282 (ENTRNLGIMA…AVVDYLPSPL (275 aa)). GTP contacts are provided by residues 17-24 (AHIDAGKT), 81-85 (DTPGH), and 135-138 (NKMD).

The protein belongs to the TRAFAC class translation factor GTPase superfamily. Classic translation factor GTPase family. EF-G/EF-2 subfamily.

The protein resides in the cytoplasm. Catalyzes the GTP-dependent ribosomal translocation step during translation elongation. During this step, the ribosome changes from the pre-translocational (PRE) to the post-translocational (POST) state as the newly formed A-site-bound peptidyl-tRNA and P-site-bound deacylated tRNA move to the P and E sites, respectively. Catalyzes the coordinated movement of the two tRNA molecules, the mRNA and conformational changes in the ribosome. In Mesoplasma florum (strain ATCC 33453 / NBRC 100688 / NCTC 11704 / L1) (Acholeplasma florum), this protein is Elongation factor G.